A 137-amino-acid polypeptide reads, in one-letter code: Small integral membrane protein 9 (137 aa).

The N-terminal stretch at 1-23 (MKPLKLFCIGLLLCPLVCLLLET) is a signal peptide. Topologically, residues 24-84 (APPPSALLTL…NHLSDFFKSS (61 aa)) are extracellular. Residues 85–105 (IPPAAIFALFVTTAIMRAAIV) traverse the membrane as a helical segment. At 106–137 (NKRLEEPHRQWTIDQRSSLEMQNMNLIKLFGG) the chain is on the cytoplasmic side.

The protein localises to the cell membrane. This Mus musculus (Mouse) protein is Small integral membrane protein 9 (Smim9).